A 171-amino-acid chain; its full sequence is MTKWFNVGKIVNTHGVKGEIRVVSRTDFPEERYKVGNTLYISNEKGGEPFPVKITSHRQHKTFDLLTFEGYGNVNEVEQFKGSLLKVPEDQLGELAEGEYYYHEIIGCNVVTEEGEALGTIKEVLSPGANDVWVIKRPKGQDLLIPYIDDVVLQVNIENKLVTIHVTEGLL.

A PRC barrel domain is found at 96-170 (AEGEYYYHEI…LVTIHVTEGL (75 aa)).

It belongs to the RimM family. As to quaternary structure, binds ribosomal protein uS19.

The protein localises to the cytoplasm. Its function is as follows. An accessory protein needed during the final step in the assembly of 30S ribosomal subunit, possibly for assembly of the head region. Essential for efficient processing of 16S rRNA. May be needed both before and after RbfA during the maturation of 16S rRNA. It has affinity for free ribosomal 30S subunits but not for 70S ribosomes. This Bacillus anthracis (strain A0248) protein is Ribosome maturation factor RimM.